We begin with the raw amino-acid sequence, 359 residues long: Pyruvate dehydrogenase E1 component subunit beta, mitochondrial (359 aa).

The N-terminal 19 residues, Met-1–Phe-19, are a transit peptide targeting the mitochondrion. Thiamine diphosphate is bound at residue Glu-82. K(+) is bound by residues Ile-135, Ala-183, Ile-184, and Asp-186.

In terms of assembly, tetramer of 2 alpha and 2 beta subunits. Thiamine diphosphate is required as a cofactor.

It localises to the mitochondrion matrix. The enzyme catalyses N(6)-[(R)-lipoyl]-L-lysyl-[protein] + pyruvate + H(+) = N(6)-[(R)-S(8)-acetyldihydrolipoyl]-L-lysyl-[protein] + CO2. The pyruvate dehydrogenase complex catalyzes the overall conversion of pyruvate to acetyl-CoA and CO(2). It contains multiple copies of three enzymatic components: pyruvate dehydrogenase (E1), dihydrolipoamide acetyltransferase (E2) and lipoamide dehydrogenase (E3). The sequence is that of Pyruvate dehydrogenase E1 component subunit beta, mitochondrial from Pisum sativum (Garden pea).